Consider the following 212-residue polypeptide: Transmembrane emp24 domain-containing protein p24delta4 (212 aa).

Residues Met-1–Ala-25 form the signal peptide. Residues Val-26 to Arg-179 are Lumenal-facing. The region spanning Ser-35–Lys-147 is the GOLD domain. N-linked (GlcNAc...) asparagine glycosylation is present at Asn-82. A coiled-coil region spans residues Ala-133 to Ile-155. Omega-N-methylated arginine occurs at positions 165 and 170. A helical transmembrane segment spans residues Val-180–Leu-200. Residues Tyr-201–Ile-212 lie on the Cytoplasmic side of the membrane. A COPII vesicle coat-binding motif is present at residues Tyr-205–Phe-206. Residues Tyr-205–Ile-212 carry the COPI vesicle coat-binding motif.

This sequence belongs to the EMP24/GP25L family. As to quaternary structure, probably oligomerizes with other members of the EMP24/GP25L family. Associates with the COPI vesicle coat (coatomer). Associates with the COPII vesicle coat (coatomer).

It is found in the endoplasmic reticulum membrane. It localises to the golgi apparatus membrane. In terms of biological role, involved in vesicular protein trafficking. Mainly functions in the early secretory pathway. Required for trafficking GLL23, a component of the PYK10 complex. May act as a receptor facilitating its packing into COPII carriers and export from the endoplasmic reticulum. This chain is Transmembrane emp24 domain-containing protein p24delta4 (CYB), found in Arabidopsis thaliana (Mouse-ear cress).